A 268-amino-acid chain; its full sequence is 5'-nucleotidase SurE (268 aa).

Positions 8, 9, 40, and 98 each coordinate a divalent metal cation.

It belongs to the SurE nucleotidase family. The cofactor is a divalent metal cation.

The protein resides in the cytoplasm. The enzyme catalyses a ribonucleoside 5'-phosphate + H2O = a ribonucleoside + phosphate. Functionally, nucleotidase that shows phosphatase activity on nucleoside 5'-monophosphates. The polypeptide is 5'-nucleotidase SurE (Trichodesmium erythraeum (strain IMS101)).